A 115-amino-acid polypeptide reads, in one-letter code: Large ribosomal subunit protein bL19 (115 aa).

This sequence belongs to the bacterial ribosomal protein bL19 family.

This protein is located at the 30S-50S ribosomal subunit interface and may play a role in the structure and function of the aminoacyl-tRNA binding site. The polypeptide is Large ribosomal subunit protein bL19 (Streptococcus mutans serotype c (strain ATCC 700610 / UA159)).